Reading from the N-terminus, the 258-residue chain is Phosphoprotein ECPP44 (258 aa).

3 disordered regions span residues Met1 to Leu25, Glu46 to Val131, and Lys148 to Ala175. 4 stretches are compositionally biased toward basic and acidic residues: residues Ser11 to Leu25, Glu46 to His80, Gly109 to Asp124, and Lys148 to Glu158.

It belongs to the plant dehydrin family. Post-translationally, phosphorylated in embryogenic and somatic embryos. Not phosphorylated in non-embryogenic cells.

Its function is as follows. Phosphorylation of ECCP44 protein is thought to be involved in the acquisition of embryogenic competence. Unlike other dehydrins, it is not thought to function as an environmental stress tolerant. The protein is Phosphoprotein ECPP44 (ECPP44) of Daucus carota (Wild carrot).